A 348-amino-acid chain; its full sequence is Methylthioribose-1-phosphate isomerase (348 aa).

Residues 51–53, Arg94, and Gln199 each bind substrate; that span reads RGA. Asp240 serves as the catalytic Proton donor. 250–251 contributes to the substrate binding site; it reads NK.

It belongs to the eIF-2B alpha/beta/delta subunits family. MtnA subfamily.

It catalyses the reaction 5-(methylsulfanyl)-alpha-D-ribose 1-phosphate = 5-(methylsulfanyl)-D-ribulose 1-phosphate. Its pathway is amino-acid biosynthesis; L-methionine biosynthesis via salvage pathway; L-methionine from S-methyl-5-thio-alpha-D-ribose 1-phosphate: step 1/6. Its function is as follows. Catalyzes the interconversion of methylthioribose-1-phosphate (MTR-1-P) into methylthioribulose-1-phosphate (MTRu-1-P). This Nitrosococcus oceani (strain ATCC 19707 / BCRC 17464 / JCM 30415 / NCIMB 11848 / C-107) protein is Methylthioribose-1-phosphate isomerase.